We begin with the raw amino-acid sequence, 307 residues long: Malate dehydrogenase (307 aa).

NAD(+) contacts are provided by residues 8–13 (GAGNVG) and aspartate 32. 2 residues coordinate substrate: arginine 81 and arginine 87. NAD(+)-binding positions include asparagine 94 and 117–119 (VSN). The substrate site is built by asparagine 119 and arginine 150. Catalysis depends on histidine 174, which acts as the Proton acceptor.

This sequence belongs to the LDH/MDH superfamily. MDH type 3 family.

The catalysed reaction is (S)-malate + NAD(+) = oxaloacetate + NADH + H(+). Functionally, catalyzes the reversible oxidation of malate to oxaloacetate. This Dehalococcoides mccartyi (strain CBDB1) protein is Malate dehydrogenase.